Consider the following 95-residue polypeptide: Small ribosomal subunit protein uS19 (95 aa).

The protein belongs to the universal ribosomal protein uS19 family.

Functionally, protein S19 forms a complex with S13 that binds strongly to the 16S ribosomal RNA. This chain is Small ribosomal subunit protein uS19, found in Chloroflexus aurantiacus (strain ATCC 29366 / DSM 635 / J-10-fl).